The sequence spans 609 residues: Kelch-like protein 20 (609 aa).

Residues 68–135 (CDVVLVVGAK…AYTSQITVEE (68 aa)) enclose the BTB domain. In terms of domain architecture, BACK spans 170–272 (CLGIRAFADT…SPKFLVGTVG (103 aa)). Kelch repeat units lie at residues 319 to 365 (VLFA…VLDD), 367 to 413 (LYAV…VLGG), 414 to 460 (FLYA…VLGG), 462 to 507 (LYAV…VYQD), 509 to 554 (IYAV…VVNG), and 556 to 601 (LMAV…VIKM).

In terms of assembly, component of the BCR(KLHL20) E3 ubiquitin ligase complex, at least composed of CUL3, KLHL20 and RBX1. Interacts with PDZ-RhoGEF/ARHGEF11, DAPK1, PML and CORO7. Interacts with F-actin. Interacts with IFN-gamma (IFNG). Interacts (via kelch repeats) with IVNS1ABP (via kelch repeats); this interaction blocks the assembly of CUL3-KLHL20 complex.

The protein resides in the cytoplasm. The protein localises to the perinuclear region. It localises to the nucleus. Its subcellular location is the golgi apparatus. It is found in the trans-Golgi network. The protein resides in the cell projection. The protein localises to the axon. It localises to the dendrite. The protein operates within protein modification; protein ubiquitination. Functionally, substrate-specific adapter of a BCR (BTB-CUL3-RBX1) E3 ubiquitin-protein ligase complex involved in interferon response and anterograde Golgi to endosome transport. The BCR(KLHL20) E3 ubiquitin ligase complex mediates the ubiquitination of DAPK1, leading to its degradation by the proteasome, thereby acting as a negative regulator of apoptosis. The BCR(KLHL20) E3 ubiquitin ligase complex also specifically mediates 'Lys-33'-linked ubiquitination. Involved in anterograde Golgi to endosome transport by mediating 'Lys-33'-linked ubiquitination of CORO7, promoting interaction between CORO7 and EPS15, thereby facilitating actin polymerization and post-Golgi trafficking. Also acts as a regulator of endothelial migration during angiogenesis by controlling the activation of Rho GTPases. The BCR(KLHL20) E3 ubiquitin ligase complex acts as a regulator of neurite outgrowth by mediating ubiquitination and degradation of PDZ-RhoGEF/ARHGEF11. The sequence is that of Kelch-like protein 20 (KLHL20) from Pongo abelii (Sumatran orangutan).